The sequence spans 132 residues: Large ribosomal subunit protein uL14 (132 aa).

It belongs to the universal ribosomal protein uL14 family. As to quaternary structure, part of the 50S ribosomal subunit. Forms a cluster with proteins L3 and L24e, part of which may contact the 16S rRNA in 2 intersubunit bridges.

In terms of biological role, binds to 23S rRNA. Forms part of two intersubunit bridges in the 70S ribosome. This is Large ribosomal subunit protein uL14 from Methanocorpusculum labreanum (strain ATCC 43576 / DSM 4855 / Z).